A 115-amino-acid polypeptide reads, in one-letter code: Anamorsin homolog 1 (115 aa).

A disordered region spans residues 30–115 (VKEATKGEDC…KVKLNLTDDI (86 aa)). [2Fe-2S] cluster-binding residues include cysteine 39, cysteine 46, cysteine 49, and cysteine 51. Residues 39–51 (CTTRRRACKNCTC) form a fe-S binding site A region. 4 residues coordinate [4Fe-4S] cluster: cysteine 77, cysteine 80, cysteine 88, and cysteine 91. Short sequence motifs (cx2C motif) lie at residues 77-80 (CGNC) and 88-91 (CATC). The fe-S binding site B stretch occupies residues 77 to 91 (CGNCAKGDAFRCATC).

Belongs to the anamorsin family. In terms of assembly, monomer. Requires [2Fe-2S] cluster as cofactor. It depends on [4Fe-4S] cluster as a cofactor.

The protein localises to the cytoplasm. The protein resides in the mitochondrion intermembrane space. Its function is as follows. Component of the cytosolic iron-sulfur (Fe-S) protein assembly (CIA) machinery. Required for the maturation of extramitochondrial Fe-S proteins. Part of an electron transfer chain functioning in an early step of cytosolic Fe-S biogenesis, facilitating the de novo assembly of a [4Fe-4S] cluster on the cytosolic Fe-S scaffold complex. Electrons are transferred from NADPH via a FAD- and FMN-containing diflavin oxidoreductase. Together with the diflavin oxidoreductase, also required for the assembly of the diferric tyrosyl radical cofactor of ribonucleotide reductase (RNR), probably by providing electrons for reduction during radical cofactor maturation in the catalytic small subunit. This is Anamorsin homolog 1 from Trypanosoma cruzi (strain CL Brener).